We begin with the raw amino-acid sequence, 86 residues long: Large ribosomal subunit protein bL31B (86 aa).

The protein belongs to the bacterial ribosomal protein bL31 family. Type B subfamily. In terms of assembly, part of the 50S ribosomal subunit.

This is Large ribosomal subunit protein bL31B from Cupriavidus taiwanensis (strain DSM 17343 / BCRC 17206 / CCUG 44338 / CIP 107171 / LMG 19424 / R1) (Ralstonia taiwanensis (strain LMG 19424)).